We begin with the raw amino-acid sequence, 717 residues long: Homeobox protein araucan (717 aa).

Disordered regions lie at residues alanine 46–leucine 80, glycine 94–glycine 130, asparagine 317–glutamate 371, serine 395–glutamine 418, threonine 478–aspartate 516, threonine 549–arginine 615, and alanine 675–asparagine 717. The segment covering glycine 94–proline 103 has biased composition (gly residues). A DNA-binding region (homeobox; TALE-type) is located at residues leucine 255 to asparagine 317. Positions asparagine 317–threonine 327 are enriched in basic and acidic residues. Serine 336 bears the Phosphoserine mark. Over residues aspartate 337–proline 347 the composition is skewed to basic and acidic residues. A compositionally biased stretch (gly residues) spans serine 395 to glycine 410. 4 stretches are compositionally biased toward low complexity: residues glutamine 492–glutamine 507, proline 559–isoleucine 589, glutamine 599–glutamine 614, and serine 687–serine 698.

The protein belongs to the TALE/IRO homeobox family.

It localises to the nucleus. Its function is as follows. Controls proneural and vein forming genes. Positive transcriptional controller of AC-SC (achaete-scute). May act as an activator that interacts with the transcriptional complex assembled on the AC and SC promoters and participates in transcription initiation. This Drosophila melanogaster (Fruit fly) protein is Homeobox protein araucan (ara).